A 388-amino-acid chain; its full sequence is Chaperone protein DnaJ 1 (388 aa).

The region spanning 10 to 74 is the J domain; that stretch reads DFYKELGVSS…VKRKEYDETR (65 aa). The CR-type zinc-finger motif lies at 159 to 237; sequence GVAMPLRLTS…CKGTGVTTRT (79 aa). Positions 172, 175, 189, 192, 211, 214, 225, and 228 each coordinate Zn(2+). 4 CXXCXGXG motif repeats span residues 172–179, 189–196, 211–218, and 225–232; these read CTNCHGSG, CSTCNGSG, CTECRGSG, and CEECKGTG.

This sequence belongs to the DnaJ family. In terms of assembly, homodimer. The cofactor is Zn(2+).

The protein resides in the cytoplasm. Participates actively in the response to hyperosmotic and heat shock by preventing the aggregation of stress-denatured proteins and by disaggregating proteins, also in an autonomous, DnaK-independent fashion. Unfolded proteins bind initially to DnaJ; upon interaction with the DnaJ-bound protein, DnaK hydrolyzes its bound ATP, resulting in the formation of a stable complex. GrpE releases ADP from DnaK; ATP binding to DnaK triggers the release of the substrate protein, thus completing the reaction cycle. Several rounds of ATP-dependent interactions between DnaJ, DnaK and GrpE are required for fully efficient folding. Also involved, together with DnaK and GrpE, in the DNA replication of plasmids through activation of initiation proteins. The chain is Chaperone protein DnaJ 1 from Mycobacterium leprae (strain TN).